A 362-amino-acid polypeptide reads, in one-letter code: EARP-interacting protein 1 (362 aa).

WD repeat units lie at residues 61–108 (HPAG…RTLE), 206–246 (AHIH…SALT), 250–290 (PHAH…SEQQ), and 319–359 (EHED…KYAL).

Belongs to the WD repeat EIPR1 family. As to expression, expressed in the hypodermis and the pharynx.

The protein resides in the cytoplasm. Functionally, plays a role in the trafficking of cargo to dense-core vesicles, probably through association with the endosome-associated recycling protein (EARP) complex. Important for neuronal function. This Caenorhabditis elegans protein is EARP-interacting protein 1.